A 1043-amino-acid polypeptide reads, in one-letter code: Rho GTPase-activating protein gacZ (1043 aa).

The disordered stretch occupies residues 1–44 (MTTTNTSIFGPRVNNSKFNNNNNNNNNNNNNNNNTSNNNNSNII). Positions 14–44 (NNSKFNNNNNNNNNNNNNNNNTSNNNNSNII) are enriched in low complexity. Cysteine 71, cysteine 74, cysteine 82, cysteine 85, cysteine 91, histidine 95, histidine 103, and cysteine 107 together coordinate Zn(2+). The MYND-type; atypical zinc finger occupies 71 to 107 (CVICKSKNVQVCTGCLMVYYCGAEHQNIDWPNHKSLC). Disordered regions lie at residues 137-163 (SGNR…NNNN), 199-532 (HLQQ…NNSN), 546-594 (DGLS…NGNR), 614-690 (FYQS…TNNN), 706-772 (NTSQ…QLSA), and 801-842 (NKVS…NNNN). A compositionally biased stretch (low complexity) spans 201 to 225 (QQQIQQTQQTQQQPPPTTTSIPTQP). The span at 241-253 (SFKSSSSGDNTPI) shows a compositional bias: polar residues. 2 stretches are compositionally biased toward low complexity: residues 254-293 (NQSP…NMSG) and 307-411 (NSIN…TNEE). A compositionally biased stretch (polar residues) spans 453 to 466 (GTLKQSSSSDSIYF). Composition is skewed to low complexity over residues 467 to 532 (NNNN…NNSN) and 547 to 594 (GLSY…NGNR). Positions 615 to 625 (YQSNKNQSNGY) are enriched in polar residues. A compositionally biased stretch (acidic residues) spans 644–671 (ENDDSHEECDDDDDDDDGGGQDGDDGLD). Low complexity-rich tracts occupy residues 726-736 (DTQSQSTNSTT), 752-771 (SSDD…SQLS), 801-821 (NKVS…NNNN), and 829-842 (NNNN…NNNN). The stretch at 825-852 (DHNENNNNNNNNINNNNNNNNNNIENII) forms a coiled coil. The 189-residue stretch at 855-1043 (IPLEEAVKKS…FGIQTYNYNS (189 aa)) folds into the Rho-GAP domain.

The protein resides in the cytoplasm. In terms of biological role, rho GTPase-activating protein involved in the signal transduction pathway. The chain is Rho GTPase-activating protein gacZ (gacZ) from Dictyostelium discoideum (Social amoeba).